A 108-amino-acid chain; its full sequence is uncharacterized protein (108 aa).

2 consecutive transmembrane segments (helical) span residues 51–71 and 86–106; these read VFAALFMAPTIQLSFCLFCFL and PLSTGTVLLFGICCQVAKSLL.

The protein localises to the membrane. This is an uncharacterized protein from Saccharomyces cerevisiae (strain ATCC 204508 / S288c) (Baker's yeast).